The sequence spans 174 residues: MTSQLEKEAREWIEETLHTKLNAQLDLLDQLQSGVILCRICKEALGANIRYKESNMPFVQMENISAFINYAQQVVHVPSQDMFQTSDLFERRNDEQVLRSIHSFSRYAAKMFPGKVRGLGPKLAEKKPRVFSAQQQREFREGVNSLQYGSFDMPTQGTEKIAFSRRRDPTGNMY.

In terms of domain architecture, Calponin-homology (CH) spans 3–109 (SQLEKEAREW…SIHSFSRYAA (107 aa)).

In terms of assembly, binds to actin.

Its subcellular location is the cytoplasm. In terms of biological role, has actin-binding and actin-bundling activity and is a component of the actin patch. Stabilizes actin filaments against disassembly. Cross-links F-actin and is required for the formation of the contractile F-actin ring. The sequence is that of Transgelin (stg1) from Schizosaccharomyces pombe (strain 972 / ATCC 24843) (Fission yeast).